A 120-amino-acid polypeptide reads, in one-letter code: Small ribosomal subunit protein eS17 (120 aa).

This sequence belongs to the eukaryotic ribosomal protein eS17 family. Component of the small ribosomal subunit.

The protein localises to the cytoplasm. The chain is Small ribosomal subunit protein eS17 (RPS17) from Encephalitozoon cuniculi (strain GB-M1) (Microsporidian parasite).